The sequence spans 137 residues: Flavodoxin (137 aa).

The Flavodoxin-like domain maps to 2–137 (VEIVYWSGTG…KELGEAAAKA (136 aa)).

The protein belongs to the flavodoxin family. FMN is required as a cofactor.

Functionally, low-potential electron donor to a number of redox enzymes. In Megasphaera elsdenii, this protein is Flavodoxin.